A 196-amino-acid polypeptide reads, in one-letter code: SPRY domain-containing protein 7 (196 aa).

An N-acetylalanine modification is found at A2. The B30.2/SPRY domain occupies 2-184 (AASAWCCLRC…FSEFYHTPPP (183 aa)).

The protein is SPRY domain-containing protein 7 (Spryd7) of Mus musculus (Mouse).